Consider the following 205-residue polypeptide: Meiotic nuclear division protein 1 homolog (205 aa).

Serine 2 bears the N-acetylserine mark. Positions 83-173 (KRKLEALNSQ…EAANRWTDNI (91 aa)) form a coiled coil.

This sequence belongs to the MND1 family. In terms of assembly, heterodimer with PSMC3IP/HOP2. MND1-PSMC3IP interacts with DMC1 and RAD51 and binds to ssDNA and dsDNA showing no preference for either form of DNA.

The protein localises to the nucleus. Required for proper homologous chromosome pairing and efficient cross-over and intragenic recombination during meiosis. Stimulates both DMC1- and RAD51-mediated homologous strand assimilation, which is required for the resolution of meiotic double-strand breaks. In Mus musculus (Mouse), this protein is Meiotic nuclear division protein 1 homolog.